A 484-amino-acid polypeptide reads, in one-letter code: tRNA sulfurtransferase (484 aa).

The region spanning 63–167 is the THUMP domain; sequence QAFGERLACI…GDKLYMVTKR (105 aa). Residues 185–186, Lys267, Gly289, and Gln298 contribute to the ATP site; that span reads LI. A disulfide bridge links Cys346 with Cys458. The Rhodanese domain maps to 406–484; sequence IDTNEVVIDI…GYHNVKVYRP (79 aa). Cys458 functions as the Cysteine persulfide intermediate in the catalytic mechanism.

Belongs to the ThiI family.

Its subcellular location is the cytoplasm. The enzyme catalyses [ThiI sulfur-carrier protein]-S-sulfanyl-L-cysteine + a uridine in tRNA + 2 reduced [2Fe-2S]-[ferredoxin] + ATP + H(+) = [ThiI sulfur-carrier protein]-L-cysteine + a 4-thiouridine in tRNA + 2 oxidized [2Fe-2S]-[ferredoxin] + AMP + diphosphate. It carries out the reaction [ThiS sulfur-carrier protein]-C-terminal Gly-Gly-AMP + S-sulfanyl-L-cysteinyl-[cysteine desulfurase] + AH2 = [ThiS sulfur-carrier protein]-C-terminal-Gly-aminoethanethioate + L-cysteinyl-[cysteine desulfurase] + A + AMP + 2 H(+). It participates in cofactor biosynthesis; thiamine diphosphate biosynthesis. Its function is as follows. Catalyzes the ATP-dependent transfer of a sulfur to tRNA to produce 4-thiouridine in position 8 of tRNAs, which functions as a near-UV photosensor. Also catalyzes the transfer of sulfur to the sulfur carrier protein ThiS, forming ThiS-thiocarboxylate. This is a step in the synthesis of thiazole, in the thiamine biosynthesis pathway. The sulfur is donated as persulfide by IscS. The chain is tRNA sulfurtransferase from Shewanella sp. (strain MR-7).